A 37-amino-acid chain; its full sequence is Large ribosomal subunit protein bL36c (37 aa).

It belongs to the bacterial ribosomal protein bL36 family.

It localises to the plastid. The protein localises to the chloroplast. This is Large ribosomal subunit protein bL36c from Lepidium virginicum (Virginia pepperweed).